A 530-amino-acid chain; its full sequence is MENDVKENLEEEEDRLLPPPPPSQSLPSTDSESEAAFETNEKILIVDFESPDDPTTGDTPPPFSWRKLWLFTGPGFLMSIAFLDPGNLEGDLQAGAIAGYSLLWLLMWATAMGLLIQMLSARVGVATGRHLAELCRDEYPTWARYVLWSMAELALIGADIQEVIGSAIAIQILSRGFLPLWAGVVITASDCFLFLFLENYGVRKLEAVFAVLIATMGLSFAWMFGETKPSGKELMIGILLPRLSSKTIRQAVGVVGCVIMPHNVFLHSALVQSRKIDPKRKSRVQEALNYYLIESSVALFISFMINLFVTTVFAKGFYGTEKANNIGLVNAGQYLQEKFGGGLLPILYIWGIGLLAAGQSSTITGTYAGQFIMGGFLNLRLKKWMRAVITRSCAIVPTMIVAIVFNTSEASLDVLNEWLNVLQSVQIPFALLPLLTLVSKEEIMGDFKIGPILQRIAWTVAALVMIINGYLLLDFFVSEVDGFLFGVTVCVWTTAYIAFIVYLISHSNFFPSPWSSSSIELPKRVSVSNS.

The interval 1-35 (MENDVKENLEEEEDRLLPPPPPSQSLPSTDSESEA) is disordered. 12 helical membrane passes run 68 to 88 (LWLFTGPGFLMSIAFLDPGNL), 96 to 116 (AIAGYSLLWLLMWATAMGLLI), 153 to 173 (LALIGADIQEVIGSAIAIQIL), 177 to 197 (FLPLWAGVVITASDCFLFLFL), 205 to 225 (LEAVFAVLIATMGLSFAWMFG), 251 to 271 (AVGVVGCVIMPHNVFLHSALV), 297 to 317 (VALFISFMINLFVTTVFAKGF), 339 to 359 (FGGGLLPILYIWGIGLLAAGQ), 395 to 415 (IVPTMIVAIVFNTSEASLDVL), 418 to 438 (WLNVLQSVQIPFALLPLLTLV), 456 to 476 (IAWTVAALVMIINGYLLLDFF), and 484 to 504 (LFGVTVCVWTTAYIAFIVYLI).

The protein belongs to the NRAMP (TC 2.A.55) family.

Its subcellular location is the membrane. Its function is as follows. Seems to be involved in iron uptake. The polypeptide is Metal transporter Nramp2 (NRAMP2) (Arabidopsis thaliana (Mouse-ear cress)).